A 146-amino-acid polypeptide reads, in one-letter code: Ribonuclease H (146 aa).

Residues 1-141 (MEKIDIFTDG…ADALANRGVE (141 aa)) enclose the RNase H type-1 domain. Aspartate 9, glutamate 47, aspartate 69, and aspartate 133 together coordinate Mg(2+).

It belongs to the RNase H family. In terms of assembly, monomer. Mg(2+) serves as cofactor.

Its subcellular location is the cytoplasm. It carries out the reaction Endonucleolytic cleavage to 5'-phosphomonoester.. In terms of biological role, endonuclease that specifically degrades the RNA of RNA-DNA hybrids. The chain is Ribonuclease H from Herminiimonas arsenicoxydans.